Consider the following 336-residue polypeptide: Phenylalanine--tRNA ligase alpha subunit (336 aa).

Glu251 serves as a coordination point for Mg(2+).

The protein belongs to the class-II aminoacyl-tRNA synthetase family. Phe-tRNA synthetase alpha subunit type 1 subfamily. Tetramer of two alpha and two beta subunits. It depends on Mg(2+) as a cofactor.

The protein resides in the cytoplasm. It catalyses the reaction tRNA(Phe) + L-phenylalanine + ATP = L-phenylalanyl-tRNA(Phe) + AMP + diphosphate + H(+). This chain is Phenylalanine--tRNA ligase alpha subunit, found in Syntrophobacter fumaroxidans (strain DSM 10017 / MPOB).